The sequence spans 233 residues: Large ribosomal subunit protein uL1 (233 aa).

The protein belongs to the universal ribosomal protein uL1 family. Part of the 50S ribosomal subunit.

Its function is as follows. Binds directly to 23S rRNA. The L1 stalk is quite mobile in the ribosome, and is involved in E site tRNA release. Functionally, protein L1 is also a translational repressor protein, it controls the translation of the L11 operon by binding to its mRNA. This chain is Large ribosomal subunit protein uL1, found in Pelobacter propionicus (strain DSM 2379 / NBRC 103807 / OttBd1).